A 219-amino-acid chain; its full sequence is Transmembrane protein 179B (219 aa).

Helical transmembrane passes span 9 to 29, 65 to 85, 98 to 118, and 162 to 182; these read VELLLFTAAFLCGALAAATLT, FVAGASGILALYCLLLLFFWV, IGLRIALAISATAIFLILVSA, and LHTAETSSWVNLILWCLALLL. At serine 206 the chain carries Phosphoserine.

It belongs to the TMEM179 family.

Its subcellular location is the membrane. The polypeptide is Transmembrane protein 179B (Tmem179b) (Mus musculus (Mouse)).